A 277-amino-acid polypeptide reads, in one-letter code: Membrane protein insertase YidC 2 (277 aa).

The signal sequence occupies residues 1–22 (MKKYRKILAMLAVLAIVLVLSG). Cys23 carries the N-palmitoyl cysteine lipid modification. Cys23 carries the S-diacylglycerol cysteine lipid modification. The next 5 helical transmembrane spans lie at 35 to 55 (FWDG…SNLF), 60 to 80 (GLGI…LMIF), 130 to 150 (ASML…QAIW), 170 to 190 (PYYV…WLAM), and 208 to 228 (PVII…YWVI). The span at 251-266 (EAKKQAERDRKRTLEK) shows a compositional bias: basic and acidic residues. Residues 251-277 (EAKKQAERDRKRTLEKARKRAIRNHKR) form a disordered region. Over residues 267–277 (ARKRAIRNHKR) the composition is skewed to basic residues.

This sequence belongs to the OXA1/ALB3/YidC family. Type 2 subfamily.

It is found in the cell membrane. Functionally, required for the insertion and/or proper folding and/or complex formation of integral membrane proteins into the membrane. Involved in integration of membrane proteins that insert both dependently and independently of the Sec translocase complex, as well as at least some lipoproteins. This is Membrane protein insertase YidC 2 from Lactiplantibacillus plantarum (strain ATCC BAA-793 / NCIMB 8826 / WCFS1) (Lactobacillus plantarum).